The chain runs to 1252 residues: DNA-directed RNA polymerase subunit beta (1252 aa).

The protein belongs to the RNA polymerase beta chain family. As to quaternary structure, the RNAP catalytic core consists of 2 alpha, 1 beta, 1 beta' and 1 omega subunit. When a sigma factor is associated with the core the holoenzyme is formed, which can initiate transcription.

The catalysed reaction is RNA(n) + a ribonucleoside 5'-triphosphate = RNA(n+1) + diphosphate. Its function is as follows. DNA-dependent RNA polymerase catalyzes the transcription of DNA into RNA using the four ribonucleoside triphosphates as substrates. In Chlamydia trachomatis serovar D (strain ATCC VR-885 / DSM 19411 / UW-3/Cx), this protein is DNA-directed RNA polymerase subunit beta.